Consider the following 379-residue polypeptide: Probable RNA 3'-terminal phosphate cyclase-like protein (379 aa).

It belongs to the RNA 3'-terminal cyclase family. Type 2 subfamily. Part of the small subunit (SSU) processome, composed of more than 70 proteins and the RNA chaperone small nucleolar RNA (snoRNA) U3.

It is found in the nucleus. Its subcellular location is the nucleolus. Its function is as follows. Part of the small subunit (SSU) processome, first precursor of the small eukaryotic ribosomal subunit. During the assembly of the SSU processome in the nucleolus, many ribosome biogenesis factors, an RNA chaperone and ribosomal proteins associate with the nascent pre-rRNA and work in concert to generate RNA folding, modifications, rearrangements and cleavage as well as targeted degradation of pre-ribosomal RNA by the RNA exosome. Does not have cyclase activity. This chain is Probable RNA 3'-terminal phosphate cyclase-like protein, found in Caenorhabditis elegans.